The chain runs to 134 residues: MGRDTIAEIITSIRNADMDRKRVVRIASTNITENIVQILLREGFIENVRKHRENNKYFLVLTLRYRRNRKRPYRNILNLKRISRPGLRIYSNYQRIPRILGGMGIVILSTSRGIMTDREARLEGIGGEILCYIW.

This sequence belongs to the universal ribosomal protein uS8 family. As to quaternary structure, part of the 30S ribosomal subunit.

It localises to the plastid. Its subcellular location is the chloroplast. Its function is as follows. One of the primary rRNA binding proteins, it binds directly to 16S rRNA central domain where it helps coordinate assembly of the platform of the 30S subunit. This is Small ribosomal subunit protein uS8c (rps8) from Nicotiana tomentosiformis (Tobacco).